Reading from the N-terminus, the 142-residue chain is ATP synthase epsilon chain (142 aa).

Belongs to the ATPase epsilon chain family. As to quaternary structure, F-type ATPases have 2 components, CF(1) - the catalytic core - and CF(0) - the membrane proton channel. CF(1) has five subunits: alpha(3), beta(3), gamma(1), delta(1), epsilon(1). CF(0) has three main subunits: a, b and c.

The protein resides in the cell membrane. Its function is as follows. Produces ATP from ADP in the presence of a proton gradient across the membrane. This Lactiplantibacillus plantarum (strain ATCC BAA-793 / NCIMB 8826 / WCFS1) (Lactobacillus plantarum) protein is ATP synthase epsilon chain.